Here is a 658-residue protein sequence, read N- to C-terminus: Transport protein particle subunit trs85-1 (658 aa).

This sequence belongs to the TRS85 family. As to quaternary structure, part of the multisubunit TRAPP (transport protein particle) complexes I and II.

The protein resides in the golgi apparatus. The protein localises to the cis-Golgi network. Functionally, component of the TRAPP I and TRAPP II complexes. TRAPP I plays a key role in the late stages of endoplasmic reticulum to Golgi traffic. TRAPP II seems to play a role in intra-Golgi transport. Has a role late in meiosis following DNA replication. This chain is Transport protein particle subunit trs85-1 (trs85-1), found in Schizosaccharomyces pombe (strain 972 / ATCC 24843) (Fission yeast).